The primary structure comprises 261 residues: tRNA (guanine-N(7)-)-methyltransferase (261 aa).

Positions 75, 100, 127, and 150 each coordinate S-adenosyl-L-methionine. Residue D150 is part of the active site. Position 154 (K154) interacts with substrate. An interaction with RNA region spans residues 156-161 (RHNKRR). Substrate contacts are provided by residues D186 and 223–226 (THFE).

It belongs to the class I-like SAM-binding methyltransferase superfamily. TrmB family.

It carries out the reaction guanosine(46) in tRNA + S-adenosyl-L-methionine = N(7)-methylguanosine(46) in tRNA + S-adenosyl-L-homocysteine. It functions in the pathway tRNA modification; N(7)-methylguanine-tRNA biosynthesis. Its function is as follows. Catalyzes the formation of N(7)-methylguanine at position 46 (m7G46) in tRNA. The chain is tRNA (guanine-N(7)-)-methyltransferase from Xanthomonas axonopodis pv. citri (strain 306).